We begin with the raw amino-acid sequence, 64 residues long: DNA gyrase inhibitor YacG (64 aa).

Zn(2+) contacts are provided by Cys10, Cys13, Cys29, and Cys33.

It belongs to the DNA gyrase inhibitor YacG family. In terms of assembly, interacts with GyrB. The cofactor is Zn(2+).

In terms of biological role, inhibits all the catalytic activities of DNA gyrase by preventing its interaction with DNA. Acts by binding directly to the C-terminal domain of GyrB, which probably disrupts DNA binding by the gyrase. The chain is DNA gyrase inhibitor YacG from Pectobacterium carotovorum subsp. carotovorum (strain PC1).